Reading from the N-terminus, the 183-residue chain is Apo-citrate lyase phosphoribosyl-dephospho-CoA transferase (183 aa).

It belongs to the CitX family.

The enzyme catalyses apo-[citrate lyase ACP] + 2'-(5''-triphospho-alpha-D-ribosyl)-3'-dephospho-CoA = holo-[citrate lyase ACP] + diphosphate. Its function is as follows. Transfers 2-(5''-triphosphoribosyl)-3'-dephosphocoenzyme-A on a serine residue to the apo-acyl carrier protein (gamma chain) of the citrate lyase to yield holo-acyl carrier protein. The sequence is that of Apo-citrate lyase phosphoribosyl-dephospho-CoA transferase from Escherichia coli O45:K1 (strain S88 / ExPEC).